The following is a 106-amino-acid chain: UPF0145 protein VV2_1464 (106 aa).

The protein belongs to the UPF0145 family.

This chain is UPF0145 protein VV2_1464, found in Vibrio vulnificus (strain CMCP6).